A 295-amino-acid chain; its full sequence is Aspartate carbamoyltransferase catalytic subunit (295 aa).

Carbamoyl phosphate contacts are provided by Arg49 and Thr50. Lys77 provides a ligand contact to L-aspartate. 3 residues coordinate carbamoyl phosphate: Arg99, His127, and Gln130. Residues Arg161 and Arg212 each contribute to the L-aspartate site. Carbamoyl phosphate-binding residues include Gly251 and Pro252.

Belongs to the aspartate/ornithine carbamoyltransferase superfamily. ATCase family. As to quaternary structure, heterododecamer (2C3:3R2) of six catalytic PyrB chains organized as two trimers (C3), and six regulatory PyrI chains organized as three dimers (R2).

It catalyses the reaction carbamoyl phosphate + L-aspartate = N-carbamoyl-L-aspartate + phosphate + H(+). It participates in pyrimidine metabolism; UMP biosynthesis via de novo pathway; (S)-dihydroorotate from bicarbonate: step 2/3. Catalyzes the condensation of carbamoyl phosphate and aspartate to form carbamoyl aspartate and inorganic phosphate, the committed step in the de novo pyrimidine nucleotide biosynthesis pathway. The protein is Aspartate carbamoyltransferase catalytic subunit of Campylobacter jejuni subsp. doylei (strain ATCC BAA-1458 / RM4099 / 269.97).